Consider the following 1028-residue polypeptide: Pentatricopeptide repeat-containing protein At3g09040, mitochondrial (1028 aa).

Residues 1-30 (MYFRVLLTPSSAMFDSFSFVRRLSYSPDLG) constitute a mitochondrion transit peptide. 24 PPR repeats span residues 94–123 (EGRLGNAIVDLYAKCAQVSYAEKQFDFLEK), 124–158 (DVTAWNSMLSMYSSIGKPGKVLRSFVSLFENQIFP), 159–193 (NKFTFSIVLSTCARETNVEFGRQIHCSMIKMGLER), 194–224 (NSYCGGALVDMYAKCDRISDARRVFEWIVDP), 225–259 (NTVCWTCLFSGYVKAGLPEEAVLVFERMRDEGHRP), 260–290 (DHLAFVTVINTYIRLGKLKDARLLFGEMSSP), 291–325 (DVVAWNVMISGHGKRGCETVAIEYFFNMRKSSVKS), 326–360 (TRSTLGSVLSAIGIVANLDLGLVVHAEAIKLGLAS), 361–391 (NIYVGSSLVSMYSKCEKMEAAAKVFEALEEK), 392–426 (NDVFWNAMIRGYAHNGESHKVMELFMDMKSSGYNI), 427–461 (DDFTFTSLLSTCAASHDLEMGSQFHSIIIKKKLAK), 462–492 (NLFVGNALVDMYAKCGALEDARQIFERMCDR), 493–527 (DNVTWNTIIGSYVQDENESEAFDLFKRMNLCGIVS), 528–562 (DGACLASTLKACTHVHGLYQGKQVHCLSVKCGLDR), 563–593 (DLHTGSSLIDMYSKCGIIKDARKVFSSLPEW), 594–627 (SVVSMNALIAGYSQNNLEEAVVLFQEMLTRGVNP), 628–662 (SEITFATIVEACHKPESLTLGTQFHGQITKRGFSS), 664–694 (GEYLGISLLGMYMNSRGMTEACALFSELSSP), 696–730 (SIVLWTGMMSGHSQNGFYEEALKFYKEMRHDGVLP), 731–765 (DQATFVTVLRVCSVLSSLREGRAIHSLIFHLAHDL), 766–796 (DELTSNTLIDMYAKCGDMKGSSQVFDEMRRR), 798–832 (NVVSWNSLINGYAKNGYAEDALKIFDSMRQSHIMP), 833–863 (DEITFLGVLTACSHAGKVSDGRKIFEMMIGQ), and 869–899 (RVDHVACMVDLLGRWGYLQEADDFIEAQNLK). Residues 904–979 (LWSSLLGACR…VPGYSWIDVE (76 aa)) form a type E motif region. The interval 980–1010 (QRTHIFAAGDKSHSEIGKIEMFLEDLYDLMK) is type E(+) motif.

It belongs to the PPR family. PCMP-E subfamily.

It is found in the mitochondrion. This chain is Pentatricopeptide repeat-containing protein At3g09040, mitochondrial (PCMP-E88), found in Arabidopsis thaliana (Mouse-ear cress).